We begin with the raw amino-acid sequence, 87 residues long: MTETEEVITLVDEEGVEHDFTVIDIIEVDGSEYAILLPMEDECEEAIILKLTHDENGNELLVDIEDDEEWEKVADAWEEMLAEEEAD.

The protein belongs to the UPF0473 family.

The sequence is that of UPF0473 protein PTH_1066 from Pelotomaculum thermopropionicum (strain DSM 13744 / JCM 10971 / SI).